Reading from the N-terminus, the 525-residue chain is AarF domain-containing protein kinase 1 (525 aa).

Positions 148 to 477 (SFDDTPLGAA…HKKRDAGSFF (330 aa)) constitute a Protein kinase domain. Residues 154–162 (LGAASLAQV) and Lys-176 each bind ATP. The active-site Proton acceptor is Asp-308.

It belongs to the protein kinase superfamily. ADCK protein kinase family.

Its subcellular location is the mitochondrion. Functionally, appears to be essential for maintaining mitochondrial cristae formation and mitochondrial function by acting via YME1L1 in a kinase-independent manner to regulate essential mitochondrial structural proteins OPA1 and IMMT. The action of this enzyme is not yet clear. It is not known if it has protein kinase activity and what type of substrate it would phosphorylate (Ser, Thr or Tyr). This is AarF domain-containing protein kinase 1 (Adck1) from Mus musculus (Mouse).